The chain runs to 311 residues: Mas-related G-protein coupled receptor member E (311 aa).

Over 1-25 (MEPREAGQHAGAADGAQEDVAFNLV) the chain is Extracellular. The helical transmembrane segment at 26–46 (ILSLTEGLGLGGLLGNGAVLW) threads the bilayer. At 47–63 (LLSSNVYRNPFAIYLLD) the chain is on the cytoplasmic side. Residues 64–84 (VACADLIFLGCHMVAIIPDLL) form a helical membrane-spanning segment. The Extracellular portion of the chain corresponds to 85 to 95 (QGRLDFPGFVQ). The helical transmembrane segment at 96 to 116 (TSLATLRFFCYIVGLSLLVAV) threads the bilayer. Residues 117 to 136 (SVEQCLAALFPAWYSCRRPR) lie on the Cytoplasmic side of the membrane. The chain crosses the membrane as a helical span at residues 137–157 (HLTTCVCALTWACCLLLHLLL). Residues 158–177 (SGACTQFFGEPSRHLCRTLW) are Extracellular-facing. A helical membrane pass occupies residues 178-198 (LVAAVLLAVLCCTMCGASLML). The Cytoplasmic segment spans residues 199–216 (LLQVERGPQRPPPRGFPT). Residues 217–237 (LILLAVLLFLFCGLPFGIYWL) traverse the membrane as a helical segment. The Extracellular portion of the chain corresponds to 238-251 (SRNLLWHIPHYFYH). The chain crosses the membrane as a helical span at residues 252–272 (FSFLTAAVYCAAKPVVYFCLG). Residues 273–311 (SAQGRRLPLRLVLQRALGDEAELGAVRETSRRGLVDIAA) are Cytoplasmic-facing.

Belongs to the G-protein coupled receptor 1 family. Mas subfamily.

It is found in the cell membrane. Its function is as follows. Orphan receptor. May regulate nociceptor function and/or development, including the sensation or modulation of pain. The chain is Mas-related G-protein coupled receptor member E (MRGPRE) from Macaca fascicularis (Crab-eating macaque).